The chain runs to 48 residues: Toxin CSTX-14 (48 aa).

4 disulfides stabilise this stretch: cysteine 3–cysteine 18, cysteine 10–cysteine 27, cysteine 17–cysteine 42, and cysteine 29–cysteine 40.

The protein belongs to the neurotoxin 19 (CSTX) family. 12 subfamily. In terms of assembly, heterodimer of A and B chains; disulfide-linked. Contains 4 disulfide bonds. In terms of tissue distribution, expressed by the venom gland.

It localises to the secreted. In Cupiennius salei (American wandering spider), this protein is Toxin CSTX-14.